The following is a 216-amino-acid chain: NADH dehydrogenase [ubiquinone] iron-sulfur protein 7, mitochondrial (216 aa).

The transit peptide at 1-37 (MAALAALRLLHPILAVRSGVGAALQVRGVHSSMAADS) directs the protein to the mitochondrion. [4Fe-4S] cluster is bound by residues C91 and C92. R114 bears the Hydroxyarginine mark. Residues C156 and C186 each coordinate [4Fe-4S] cluster.

This sequence belongs to the complex I 20 kDa subunit family. Core subunit of respiratory chain NADH dehydrogenase (Complex I) which is composed of 45 different subunits. This is a component of the iron-sulfur (IP) fragment of the enzyme. The cofactor is [4Fe-4S] cluster. Hydroxylated ar Arg-114 by NDUFAF5 early in the pathway of assembly of complex I, before the formation of the juncture between peripheral and membrane arms.

The protein resides in the mitochondrion inner membrane. The enzyme catalyses a ubiquinone + NADH + 5 H(+)(in) = a ubiquinol + NAD(+) + 4 H(+)(out). Its function is as follows. Core subunit of the mitochondrial membrane respiratory chain NADH dehydrogenase (Complex I) which catalyzes electron transfer from NADH through the respiratory chain, using ubiquinone as an electron acceptor. Essential for the catalytic activity of complex I. This chain is NADH dehydrogenase [ubiquinone] iron-sulfur protein 7, mitochondrial (NDUFS7), found in Bos taurus (Bovine).